Here is a 351-residue protein sequence, read N- to C-terminus: Biotin synthase (351 aa).

One can recognise a Radical SAM core domain in the interval Asn-58–Arg-285. Cys-73, Cys-77, and Cys-80 together coordinate [4Fe-4S] cluster. Residues Cys-117, Cys-148, Cys-208, and Arg-280 each contribute to the [2Fe-2S] cluster site.

This sequence belongs to the radical SAM superfamily. Biotin synthase family. As to quaternary structure, homodimer. The cofactor is [4Fe-4S] cluster. [2Fe-2S] cluster is required as a cofactor.

The catalysed reaction is (4R,5S)-dethiobiotin + (sulfur carrier)-SH + 2 reduced [2Fe-2S]-[ferredoxin] + 2 S-adenosyl-L-methionine = (sulfur carrier)-H + biotin + 2 5'-deoxyadenosine + 2 L-methionine + 2 oxidized [2Fe-2S]-[ferredoxin]. It functions in the pathway cofactor biosynthesis; biotin biosynthesis; biotin from 7,8-diaminononanoate: step 2/2. In terms of biological role, catalyzes the conversion of dethiobiotin (DTB) to biotin by the insertion of a sulfur atom into dethiobiotin via a radical-based mechanism. The protein is Biotin synthase of Paraburkholderia phymatum (strain DSM 17167 / CIP 108236 / LMG 21445 / STM815) (Burkholderia phymatum).